Here is a 406-residue protein sequence, read N- to C-terminus: Phosphopentomutase (406 aa).

6 residues coordinate Mn(2+): D10, D305, H310, D346, H347, and H358.

Belongs to the phosphopentomutase family. Mn(2+) serves as cofactor.

The protein localises to the cytoplasm. The catalysed reaction is 2-deoxy-alpha-D-ribose 1-phosphate = 2-deoxy-D-ribose 5-phosphate. It catalyses the reaction alpha-D-ribose 1-phosphate = D-ribose 5-phosphate. It functions in the pathway carbohydrate degradation; 2-deoxy-D-ribose 1-phosphate degradation; D-glyceraldehyde 3-phosphate and acetaldehyde from 2-deoxy-alpha-D-ribose 1-phosphate: step 1/2. Its function is as follows. Isomerase that catalyzes the conversion of deoxy-ribose 1-phosphate (dRib-1-P) and ribose 1-phosphate (Rib-1-P) to deoxy-ribose 5-phosphate (dRib-5-P) and ribose 5-phosphate (Rib-5-P), respectively. The polypeptide is Phosphopentomutase (Sinorhizobium fredii (strain NBRC 101917 / NGR234)).